The primary structure comprises 117 residues: Protein Wnt-6 (117 aa).

The O-palmitoleoyl serine; by PORCN moiety is linked to residue Ser-1. Cys-83 and Cys-98 are oxidised to a cystine. Asn-84 carries an N-linked (GlcNAc...) asparagine glycan.

This sequence belongs to the Wnt family. In terms of processing, palmitoleoylation is required for efficient binding to frizzled receptors. Depalmitoleoylation leads to Wnt signaling pathway inhibition.

The protein resides in the secreted. The protein localises to the extracellular space. Its subcellular location is the extracellular matrix. Ligand for members of the frizzled family of seven transmembrane receptors. Probable developmental protein. May be a signaling molecule which affects the development of discrete regions of tissues. Is likely to signal over only few cell diameters. This Plethodon jordani (Red-cheeked salamander) protein is Protein Wnt-6 (WNT-6).